We begin with the raw amino-acid sequence, 189 residues long: UPF0301 protein A1E_00140 (189 aa).

This sequence belongs to the UPF0301 (AlgH) family.

The polypeptide is UPF0301 protein A1E_00140 (Rickettsia canadensis (strain McKiel)).